The following is a 426-amino-acid chain: C4-dicarboxylate transport protein (426 aa).

8 consecutive transmembrane segments (helical) span residues 8 to 28 (VLYV…HFYP), 44 to 64 (LIKM…IAGM), 78 to 98 (LLYF…ATHV), 148 to 168 (GEIL…ATAG), 173 to 193 (VVTG…RIIT), 222 to 242 (LIGT…GIIA), 297 to 317 (GYSF…LFIA), and 355 to 375 (AATL…ILGI).

It belongs to the dicarboxylate/amino acid:cation symporter (DAACS) (TC 2.A.23) family.

It is found in the cell inner membrane. In terms of biological role, responsible for the transport of dicarboxylates such as succinate, fumarate, and malate from the periplasm across the membrane. This chain is C4-dicarboxylate transport protein, found in Paraburkholderia xenovorans (strain LB400).